The primary structure comprises 195 residues: dITP/XTP pyrophosphatase (195 aa).

Substrate is bound at residue 9 to 14 (TNNQGK). Mg(2+) contacts are provided by E39 and D68. Residue D68 is the Proton acceptor of the active site. Substrate is bound by residues S69, 146–149 (FGYD), K169, and 174–175 (HR).

This sequence belongs to the HAM1 NTPase family. In terms of assembly, homodimer. Requires Mg(2+) as cofactor.

The enzyme catalyses XTP + H2O = XMP + diphosphate + H(+). The catalysed reaction is dITP + H2O = dIMP + diphosphate + H(+). It catalyses the reaction ITP + H2O = IMP + diphosphate + H(+). Functionally, pyrophosphatase that catalyzes the hydrolysis of nucleoside triphosphates to their monophosphate derivatives, with a high preference for the non-canonical purine nucleotides XTP (xanthosine triphosphate), dITP (deoxyinosine triphosphate) and ITP. Seems to function as a house-cleaning enzyme that removes non-canonical purine nucleotides from the nucleotide pool, thus preventing their incorporation into DNA/RNA and avoiding chromosomal lesions. In Gloeobacter violaceus (strain ATCC 29082 / PCC 7421), this protein is dITP/XTP pyrophosphatase.